Here is a 420-residue protein sequence, read N- to C-terminus: Probable endo-beta-1,4-glucanase celB (420 aa).

The N-terminal stretch at 1-18 (MLRKLTPLALALLPLVAG) is a signal peptide. N-linked (GlcNAc...) asparagine glycosylation is present at Asn118. The active-site Nucleophile is the Glu215. The active-site Proton donor is Glu220. N-linked (GlcNAc...) asparagine glycosylation is found at Asn234, Asn293, and Asn383.

It belongs to the glycosyl hydrolase 7 (cellulase C) family.

It is found in the secreted. It catalyses the reaction Endohydrolysis of (1-&gt;4)-beta-D-glucosidic linkages in cellulose, lichenin and cereal beta-D-glucans.. Its function is as follows. Has endoglucanase activity on substrates containing beta-1,4 glycosidic bonds, like in carboxymethylcellulose (CMC), hydroxyethylcellulose (HEC) and beta-glucan. Involved in the degradation of complex natural cellulosic substrates. The chain is Probable endo-beta-1,4-glucanase celB (celB) from Aspergillus terreus (strain NIH 2624 / FGSC A1156).